We begin with the raw amino-acid sequence, 553 residues long: Mucolipin-3 (553 aa).

The Cytoplasmic segment spans residues 1–62 (MANPEVLVSS…FWARGRKPWK (62 aa)). The interaction with phosphoinositides stretch occupies residues 52-62 (KFWARGRKPWK). Residues 63–83 (LAIQILKIAMVTIQLVLFGLS) form a helical membrane-spanning segment. The Extracellular portion of the chain corresponds to 84 to 283 (NQMVVAFKEE…VSGSIQKNTH (200 aa)). The extracellular/lumenal pore loop stretch occupies residues 104 to 118 (KGYMDRMDDTYAVYT). N-linked (GlcNAc...) asparagine glycosylation occurs at asparagine 138. A disulfide bridge links cysteine 159 with cysteine 185. N-linked (GlcNAc...) asparagine glycosylation is present at asparagine 205. A disulfide bridge connects residues cysteine 238 and cysteine 269. The chain crosses the membrane as a helical span at residues 284-304 (YMMIFDAFVILTCLASLVLCA). The Cytoplasmic segment spans residues 305–341 (RSVIRGLQLQQEFVNFFLLHYKKEVSASDQMEFINGW). Residues 342–362 (YIMIIISDILTIVGSVLKMEI) form a helical membrane-spanning segment. The Extracellular portion of the chain corresponds to 363–371 (QAKSLTSYD). The helical transmembrane segment at 372–392 (VCSILLGTSTMLVWLGVIRYL) threads the bilayer. At 393 to 414 (GFFAKYNLLILTLQAALPNVMR) the chain is on the cytoplasmic side. A helical transmembrane segment spans residues 415-435 (FCCCAAMIYLGYCFCGWIVLG). Over 436 to 443 (PYHEKFRS) the chain is Extracellular. The segment at residues 444–464 (LNRVSECLFSLINGDDMFSTF) is an intramembrane region (pore-forming). Residues 456–459 (NGDD) carry the Selectivity filter motif. Residues 465–475 (AKMQQKSYLVW) lie on the Extracellular side of the membrane. Residues 476–497 (LFSRVYLYSFISLFIYMILSLF) traverse the membrane as a helical segment. Topologically, residues 498 to 553 (IALITDTYETIKHYQQDGFPETELRKFIAECKDLPNSGKYRLEDDPPGSLLCCCKK) are cytoplasmic.

The protein belongs to the transient receptor (TC 1.A.4) family. Polycystin subfamily. MCOLN3 sub-subfamily. Homotetramer. Can heterooligomerize with MCOLN1; heteromeric assemblies have different channel properties as compared to the respective homooligomers and may be tissue-specific. May heterooligomerize with TRPV5 to form a functional distinct ion channel. Interacts with GABARAPL2. In terms of processing, N-glycosylated. As to expression, expressed in the cochlea; particularly in the inner and outer hair cells (at protein level).

It is found in the early endosome membrane. The protein localises to the late endosome membrane. It localises to the cytoplasmic vesicle. Its subcellular location is the autophagosome membrane. The protein resides in the cell projection. It is found in the stereocilium membrane. It carries out the reaction Ca(2+)(in) = Ca(2+)(out). The enzyme catalyses Mg(2+)(in) = Mg(2+)(out). It catalyses the reaction K(+)(in) = K(+)(out). The catalysed reaction is Na(+)(in) = Na(+)(out). Channel activity is activated by PtdIns(3,5)P2 (phosphatidylinositol 3,5-bisphosphate). Inhibited by lumenal H(+) and Na(+). The channel pore shows dynamic behavior and undergoes spontaneous, Ca(2+)-dependent modulation when conducting Ca(2+). Functionally, nonselective cation channel probably playing a role in the regulation of membrane trafficking events. Acts as a Ca(2+)-permeable cation channel with inwardly rectifying activity. Mediates release of Ca(2+) from endosomes to the cytoplasm, contributes to endosomal acidification and is involved in the regulation of membrane trafficking and fusion in the endosomal pathway. Also permeable to Mg(2+), Na(+) and K(+). Does not seem to act as mechanosensory transduction channel in inner ear sensory hair cells. Proposed to play a critical role at the cochlear stereocilia ankle-link region during hair-bundle growth. Involved in the regulation of autophagy. Through association with GABARAPL2 may be involved in autophagosome formation possibly providing Ca(2+) for the fusion process. Through a possible and probably tissue-specific heteromerization with MCOLN1 may be at least in part involved in many lysosome-dependent cellular events. Possible heteromeric ion channel assemblies with TRPV5 show pharmacological similarity with TRPML3. The polypeptide is Mucolipin-3 (Mcoln3) (Mus musculus (Mouse)).